Consider the following 165-residue polypeptide: UPF0114 protein in repA1-repA2 intergenic region (165 aa).

A run of 3 helical transmembrane segments spans residues 10–32 (YASR…LLTL), 53–75 (LVLV…MVMF), and 134–156 (DQIM…MACI).

Belongs to the UPF0114 family.

It localises to the cell membrane. This is UPF0114 protein in repA1-repA2 intergenic region from Buchnera aphidicola subsp. Baizongia pistaciae (strain Bp).